Here is a 471-residue protein sequence, read N- to C-terminus: Citrate synthase, mitochondrial (471 aa).

The transit peptide at 1–18 (MASLRSATALSRLRSRAG) directs the protein to the mitochondrion. Active-site residues include histidine 307, histidine 353, and aspartate 408.

Belongs to the citrate synthase family. Homodimer.

It is found in the mitochondrion matrix. It carries out the reaction oxaloacetate + acetyl-CoA + H2O = citrate + CoA + H(+). It participates in carbohydrate metabolism; tricarboxylic acid cycle; isocitrate from oxaloacetate: step 1/2. The protein is Citrate synthase, mitochondrial (CIT) of Citrus maxima (Pomelo).